The sequence spans 245 residues: TPR repeat-containing protein PA4299 (245 aa).

An N-terminal signal peptide occupies residues 1–16 (MKALIGIGLCAALLGG). Residue Cys-17 is the site of N-palmitoyl cysteine attachment. A lipid anchor (S-diacylglycerol cysteine) is attached at Cys-17. 3 TPR repeats span residues 100–133 (PEAHHGLGLLALRNGDSARAVLELREAARLRPTE), 135–167 (RFRNDLGVALLKRGDRVGARFEFITALELQQGG), and 169–200 (LPATNLLGLLYLQGDREDAQRLIERLQLDARD). Residues 210 to 245 (SWGAVPTPGAAPASDDPLAELPAEANMHTAMANEAP) are disordered.

The protein resides in the cell membrane. This is TPR repeat-containing protein PA4299 from Pseudomonas aeruginosa (strain ATCC 15692 / DSM 22644 / CIP 104116 / JCM 14847 / LMG 12228 / 1C / PRS 101 / PAO1).